The primary structure comprises 235 residues: Ribose-5-phosphate isomerase A (235 aa).

Residues 32–35 (TGST), 89–92 (DGAD), and 102–105 (KGGG) contribute to the substrate site. Catalysis depends on Glu-111, which acts as the Proton acceptor. Substrate is bound at residue Lys-129.

Belongs to the ribose 5-phosphate isomerase family. In terms of assembly, homodimer.

The enzyme catalyses aldehydo-D-ribose 5-phosphate = D-ribulose 5-phosphate. It participates in carbohydrate degradation; pentose phosphate pathway; D-ribose 5-phosphate from D-ribulose 5-phosphate (non-oxidative stage): step 1/1. Its function is as follows. Catalyzes the reversible conversion of ribose-5-phosphate to ribulose 5-phosphate. In Synechocystis sp. (strain ATCC 27184 / PCC 6803 / Kazusa), this protein is Ribose-5-phosphate isomerase A.